Here is a 2076-residue protein sequence, read N- to C-terminus: Protein Ycf2 (2076 aa).

Residue 1458–1465 (GSIGTGRS) coordinates ATP.

It belongs to the Ycf2 family.

It localises to the plastid. Its subcellular location is the chloroplast stroma. Probable ATPase of unknown function. Its presence in a non-photosynthetic plant (Epifagus virginiana) and experiments in tobacco indicate that it has an essential function which is probably not related to photosynthesis. The sequence is that of Protein Ycf2 from Acorus calamus (Sweet flag).